The chain runs to 126 residues: Large ribosomal subunit protein bL12 (126 aa).

Belongs to the bacterial ribosomal protein bL12 family. As to quaternary structure, homodimer. Part of the ribosomal stalk of the 50S ribosomal subunit. Forms a multimeric L10(L12)X complex, where L10 forms an elongated spine to which 2 to 4 L12 dimers bind in a sequential fashion. Binds GTP-bound translation factors.

Functionally, forms part of the ribosomal stalk which helps the ribosome interact with GTP-bound translation factors. Is thus essential for accurate translation. This chain is Large ribosomal subunit protein bL12, found in Nocardia farcinica (strain IFM 10152).